The sequence spans 233 residues: Ras-related protein RabV (233 aa).

GTP is bound at residue Gly15–Ser22. Positions Tyr37 to Phe45 match the Effector region motif. Residues Asp63 to His67 and Thr122 to Asp125 contribute to the GTP site. The segment at Gln143–Gln182 is disordered. Low complexity predominate over residues Asn144–Asn180.

This sequence belongs to the small GTPase superfamily. Rab family.

The sequence is that of Ras-related protein RabV (rabV) from Dictyostelium discoideum (Social amoeba).